We begin with the raw amino-acid sequence, 194 residues long: Glycerol-3-phosphate acyltransferase (194 aa).

A run of 5 helical transmembrane segments spans residues 4 to 24 (ELIL…LLLA), 80 to 100 (WVAA…FLGF), 112 to 132 (VFLG…IGIV), 137 to 157 (YISL…AAVE), and 161 to 181 (LLVG…RENI).

Belongs to the PlsY family. In terms of assembly, probably interacts with PlsX.

The protein resides in the cell inner membrane. It catalyses the reaction an acyl phosphate + sn-glycerol 3-phosphate = a 1-acyl-sn-glycero-3-phosphate + phosphate. Its pathway is lipid metabolism; phospholipid metabolism. In terms of biological role, catalyzes the transfer of an acyl group from acyl-phosphate (acyl-PO(4)) to glycerol-3-phosphate (G3P) to form lysophosphatidic acid (LPA). This enzyme utilizes acyl-phosphate as fatty acyl donor, but not acyl-CoA or acyl-ACP. This is Glycerol-3-phosphate acyltransferase from Geobacter sulfurreducens (strain ATCC 51573 / DSM 12127 / PCA).